A 234-amino-acid polypeptide reads, in one-letter code: Transcription factor ILR3 (234 aa).

The segment at 34-85 is disordered; the sequence is QPIGVSSNSSAGVDGSAGNSEASKEPGSKKRGRCESSSATSSKACREKQRRD. Residues 36–54 show a composition bias toward polar residues; the sequence is IGVSSNSSAGVDGSAGNSE. The bHLH domain occupies 71-122; it reads SATSSKACREKQRRDRLNDKFMELGAILEPGNPPKTDKAAILVDAVRMVTQL.

In terms of assembly, homodimer. Interacts with BTS and BHLH47/PYE. Widely expressed throughout development, mostly in vasculatures.

The protein resides in the nucleus. Transcription factor. Plays a role in resistance to amide-linked indole-3-acetic acid (IAA) conjugates such as IAA-Leu and IAA-Phe. May regulate gene expression in response to metal homeostasis changes. This Arabidopsis thaliana (Mouse-ear cress) protein is Transcription factor ILR3 (ILR3).